The following is a 394-amino-acid chain: Actin-related protein 2-B (394 aa).

ATP-binding positions include 160 to 162, 214 to 218, and 305 to 310; these read GDG, RMMKE, and GGSTMY.

It belongs to the actin family. ARP2 subfamily. Component of the Arp2/3 complex composed of actr2/arp2, actr3/arp3, arpc1b, arpc2, arpc3, arpc4 and arpc5.

It is found in the cytoplasm. The protein resides in the cytoskeleton. It localises to the cell projection. Its subcellular location is the nucleus. In terms of biological role, ATP-binding component of the Arp2/3 complex, a multiprotein complex that mediates actin polymerization upon stimulation by nucleation-promoting factor (NPF). The Arp2/3 complex mediates the formation of branched actin networks in the cytoplasm, providing the force for cell motility. Seems to contact the pointed end of the daughter actin filament. In addition to its role in the cytoplasmic cytoskeleton, the Arp2/3 complex also promotes actin polymerization in the nucleus, thereby regulating gene transcription and repair of damaged DNA. The Arp2/3 complex promotes homologous recombination (HR) repair in response to DNA damage by promoting nuclear actin polymerization, leading to drive motility of double-strand breaks (DSBs). The polypeptide is Actin-related protein 2-B (actr2b) (Danio rerio (Zebrafish)).